Consider the following 294-residue polypeptide: Enoyl-CoA hydratase domain-containing protein 3, mitochondrial (294 aa).

A mitochondrion-targeting transit peptide spans 1–61; sequence MSWLRSCGER…IILNNPQQRN (61 aa).

It belongs to the enoyl-CoA hydratase/isomerase family.

The protein localises to the mitochondrion. Its function is as follows. May play a role in fatty acid biosynthesis and insulin sensitivity. This Xenopus laevis (African clawed frog) protein is Enoyl-CoA hydratase domain-containing protein 3, mitochondrial (echdc3).